A 432-amino-acid polypeptide reads, in one-letter code: Adenylosuccinate synthetase (432 aa).

GTP contacts are provided by residues 12 to 18 (GDEGKGK) and 40 to 42 (GHT). The active-site Proton acceptor is the Asp13. Asp13 and Gly40 together coordinate Mg(2+). Residues 13–16 (DEGK), 38–41 (NAGH), Thr129, Arg143, Gln224, Thr239, and Arg303 each bind IMP. The active-site Proton donor is His41. 299–305 (VTTGRRR) is a binding site for substrate. Residues Arg305, 331–333 (KLD), and 413–415 (GVG) each bind GTP.

This sequence belongs to the adenylosuccinate synthetase family. In terms of assembly, homodimer. Mg(2+) serves as cofactor.

It is found in the cytoplasm. It catalyses the reaction IMP + L-aspartate + GTP = N(6)-(1,2-dicarboxyethyl)-AMP + GDP + phosphate + 2 H(+). The protein operates within purine metabolism; AMP biosynthesis via de novo pathway; AMP from IMP: step 1/2. In terms of biological role, plays an important role in the de novo pathway of purine nucleotide biosynthesis. Catalyzes the first committed step in the biosynthesis of AMP from IMP. The chain is Adenylosuccinate synthetase from Mycolicibacterium paratuberculosis (strain ATCC BAA-968 / K-10) (Mycobacterium paratuberculosis).